Consider the following 289-residue polypeptide: MNRVSFIKTPFNIGAKWRLEDVFLLIIMILLNYPVYYQQPFERQFYINDLTISHPYATTERVNNNMLFVYSFVVPSLTILIIGSILADRRHLIFILYTSLLGLSLAWFSTSFFTNFIKNWIGRLRPDFLDRCQPVEGLPLDTLFTAKDVCTTKNHERLLDGFRTTPSGHSSESFAGLGYLYFWLCGQLLTESPLMPLWRKMVAFLPLLGAALIALSRTQDYRHHFVDVILGSMLGYIMAHFFYRRIFPPIDDPLPFKPLMDDSDVTLEEAVTHQRIPDEELHPLSDEGM.

Over 1–21 (MNRVSFIKTPFNIGAKWRLED) the chain is Vacuolar. A helical membrane pass occupies residues 22–42 (VFLLIIMILLNYPVYYQQPFE). Residues 43–65 (RQFYINDLTISHPYATTERVNNN) are Cytoplasmic-facing. Residues 66-86 (MLFVYSFVVPSLTILIIGSIL) traverse the membrane as a helical segment. Residues 87–92 (ADRRHL) are Vacuolar-facing. The helical transmembrane segment at 93-113 (IFILYTSLLGLSLAWFSTSFF) threads the bilayer. The Cytoplasmic segment spans residues 114–172 (TNFIKNWIGRLRPDFLDRCQPVEGLPLDTLFTAKDVCTTKNHERLLDGFRTTPSGHSSE). Residues 118 to 126 (KNWIGRLRP) form a phosphatase sequence motif I region. Residues 166–169 (PSGH) are phosphatase sequence motif II. 2 helical membrane-spanning segments follow: residues 173 to 193 (SFAGLGYLYFWLCGQLLTESP) and 194 to 214 (LMPLWRKMVAFLPLLGAALIA). The Cytoplasmic segment spans residues 215–222 (LSRTQDYR). Residues 216 to 227 (SRTQDYRHHFVD) form a phosphatase sequence motif III region. The chain crosses the membrane as a helical span at residues 223-243 (HHFVDVILGSMLGYIMAHFFY). Over 244 to 289 (RRIFPPIDDPLPFKPLMDDSDVTLEEAVTHQRIPDEELHPLSDEGM) the chain is Vacuolar. Residue S285 is modified to Phosphoserine.

Belongs to the PA-phosphatase related phosphoesterase family.

The protein localises to the vacuole membrane. The catalysed reaction is a 1,2-diacyl-sn-glycerol 3-diphosphate + H2O = a 1,2-diacyl-sn-glycero-3-phosphate + phosphate + H(+). The enzyme catalyses a 1,2-diacyl-sn-glycero-3-phosphate + H2O = a 1,2-diacyl-sn-glycerol + phosphate. It carries out the reaction a 1-acyl-sn-glycero-3-phosphate + H2O = a 1-acyl-sn-glycerol + phosphate. Its activity is regulated as follows. Inhibited by sodium fluoride (NaF) and pyrophosphate. Strongly inhibited by manganese ion and, to a lower extent, by magnesium and calcium ions. Also inhibited by Cu(2+) ion. In an indirect manner, it is also inhibited by the zinc ion which is able to form a complex with DGPP and prevent the enzyme from removing the phosphate from the substrate. Not inhibited by N-ethylmaleimide. Functionally, catalyzes the dephosphorylation of diacylglycerol diphosphate (DGPP) to phosphatidate (PA) and the subsequent dephosphorylation of PA to diacylglycerol (DAG). Together with LPP1, regulates intracellular DGPP and PA levels, which are phospholipid molecules believed to play a signaling role in stress response. Can also use lysophosphatidic acid (LPA) and phosphatidylglycerophosphate as substrates. Substrate preference is DGPP &gt; LPA &gt; PA. Activity is independent of a divalent cation ion and insensitive to inhibition by N-ethylmaleimide. The protein is Diacylglycerol pyrophosphate phosphatase 1 (DPP1) of Saccharomyces cerevisiae (strain ATCC 204508 / S288c) (Baker's yeast).